The following is a 161-amino-acid chain: Probable cell wall elongation regulator TseB (161 aa).

The Cytoplasmic segment spans residues 1–5 (MRKKA). The helical transmembrane segment at 6–26 (LIFTVIFGIIFLAVLLVSASI) threads the bilayer. Residues 27–161 (YKSAMAQKEE…TGKILKNITP (135 aa)) lie on the Extracellular side of the membrane.

Interacts with the penicillin-binding protein PBP2A, a monofunctional transpeptidase.

It is found in the cell membrane. Functionally, required for normal cell shape. Plays an important role in cell wall elongation during exponential phase and spore outgrowth. Probably regulates the activity of the penicillin-binding protein PBP2A through a direct interaction. Not required for PBP2A activity, stability and localization. The polypeptide is Probable cell wall elongation regulator TseB (Bacillus subtilis (strain 168)).